The chain runs to 403 residues: Tryptophan synthase beta chain (403 aa).

Residue Lys-93 is modified to N6-(pyridoxal phosphate)lysine.

The protein belongs to the TrpB family. Tetramer of two alpha and two beta chains. It depends on pyridoxal 5'-phosphate as a cofactor.

It carries out the reaction (1S,2R)-1-C-(indol-3-yl)glycerol 3-phosphate + L-serine = D-glyceraldehyde 3-phosphate + L-tryptophan + H2O. The protein operates within amino-acid biosynthesis; L-tryptophan biosynthesis; L-tryptophan from chorismate: step 5/5. In terms of biological role, the beta subunit is responsible for the synthesis of L-tryptophan from indole and L-serine. This chain is Tryptophan synthase beta chain, found in Acinetobacter baylyi (strain ATCC 33305 / BD413 / ADP1).